The sequence spans 1653 residues: Protein strawberry notch (1653 aa).

5 disordered regions span residues 1 to 46 (MTSK…GRDL), 190 to 211 (GSPA…GGAI), 237 to 265 (GSNA…PNPG), 317 to 345 (NNQK…VKGN), and 883 to 1043 (SVAD…PSGS). A compositionally biased stretch (acidic residues) spans 11-36 (DADDDNDNFDEDDSGSDFDDDEDPDQ). A phosphoserine mark is found at S24 and S26. Positions 194–205 (ARSSGNAGTTGS) are enriched in polar residues. Over residues 256–265 (SPTGGIPNPG) the composition is skewed to low complexity. Residues 329 to 342 (GSGGPAGGAPGSGV) show a composition bias toward gly residues. The segment covering 883 to 901 (SVADSTSSLSNNSNITTAA) has biased composition (low complexity). Phosphoserine is present on residues S929 and S931. Over residues 966 to 975 (IDDEDEDHDV) the composition is skewed to acidic residues. The segment covering 980 to 998 (RSVASDASSDFNPFFSGSD) has biased composition (polar residues). Basic residues predominate over residues 1008–1027 (RSKKSKKAQKKSKKKVKKEK). Residues 1064 to 1125 (LSTQDKIQDL…RKIERLGARL (62 aa)) adopt a coiled-coil conformation.

It belongs to the SBNO family. As to quaternary structure, interacts with vg for function in the wing disk. Interacts with Su(H) for function in the eye disk. At stage 8, when the formation of the midline precursor cells depends on Notch signaling, high level of expression is seen in the midline precursor cells and a lower level in the surrounding epidermal cells. Between stages 11 and 14, expression is uniform throughout the epidermis, and at stage 16, high level of expression is restricted to the central nervous system. Expressed in the larval leg, wing and eye imaginal disks. Expression is over the wing disk and accumulates within the pleural region.

Its subcellular location is the nucleus. Notch pathway component, may contribute to the specificity between lateral and inductive Notch signaling pathways in the wing disk. Required during many developmental stages including oogenesis, embryogenesis and imaginal development of the eye, wing and leg. Ebi and sno regulate EGFR-dependent Delta transcription in the developing eye, by antagonizing a repressor function of Suppressor of Hairless (Su(H)). They are required in the R-cells for normal cone cell development. This Drosophila melanogaster (Fruit fly) protein is Protein strawberry notch.